The chain runs to 511 residues: Aprataxin and PNK-like factor (511 aa).

Residues 1–108 (MSGGFELQPR…RILSIPSEVE (108 aa)) enclose the FHA-like domain. Ser116 carries the post-translational modification Phosphoserine; by ATM. Ser149 carries the post-translational modification Phosphoserine. The KBM signature appears at 182–191 (RKRILPTWML). A disordered region spans residues 223 to 370 (KSQLNTTQQG…ATDSVLQGSE (148 aa)). Polar residues-rich tracts occupy residues 225-249 (QLNT…SAEQ) and 263-293 (STIS…NAQR). The segment covering 304–315 (VSKHKIATKRTP) has biased composition (basic residues). Positions 324 to 344 (CSENCSSAQGDSLQDESQGSH) are enriched in polar residues. Residues 345–355 (SESSSNPSNPE) are compositionally biased toward low complexity. Positions 376, 381, 386, and 387 each coordinate a glycoprotein. A PBZ-type 1 zinc finger spans residues 377–398 (TSCMYGANCYRKNPVHFQHFSH). Positions 406–416 (GVQIVGQDETD) are flexible linker. The PBZ-type 2 zinc finger occupies 419-440 (PECPYGPSCYRKNPQHKIEYRH). 3 residues coordinate a glycoprotein: Tyr423, Tyr428, and Arg429. The segment at 449-497 (LDEDNDNVGQPNEYDLNDSFLDDEEEDYEPTDEDSDWEPGKEDEEKEDV) is disordered. A compositionally biased stretch (acidic residues) spans 468-497 (FLDDEEEDYEPTDEDSDWEPGKEDEEKEDV). The short motif at 476–500 (YEPTDEDSDWEPGKEDEEKEDVEEL) is the NAP1L motif element. Residues 487-511 (PGKEDEEKEDVEELLKEAKRFMKRK) adopt a coiled-coil conformation.

Belongs to the APLF family. In terms of assembly, interacts with LIG4. Interacts with PARP1. Interacts with XRCC4. Interacts (via KBM motif) with XRCC5 and XRCC6; promoting recruitment to DNA damage sites. Interacts with XRCC1. Interacts (via C-terminal disordered region) with histones; interacts with histone H2A, H2B and H3-H4. In terms of processing, poly-ADP-ribosylated. In addition to binding non covalently poly-ADP-ribose via its PBZ-type zinc fingers, the protein is also covalently poly-ADP-ribosylated by PARP1. Phosphorylated in an ATM-dependent manner upon double-strand DNA break.

It is found in the nucleus. The protein resides in the chromosome. The protein localises to the cytoplasm. Its subcellular location is the cytosol. In terms of biological role, histone chaperone involved in single-strand and double-strand DNA break repair. Recruited to sites of DNA damage through interaction with branched poly-ADP-ribose chains, a polymeric post-translational modification synthesized transiently at sites of chromosomal damage to accelerate DNA strand break repair reactions. Following recruitment to DNA damage sites, acts as a histone chaperone that mediates histone eviction during DNA repair and promotes recruitment of histone variant MACROH2A1. Also has a nuclease activity: displays apurinic-apyrimidinic (AP) endonuclease and 3'-5' exonuclease activities in vitro. Also able to introduce nicks at hydroxyuracil and other types of pyrimidine base damage. Together with PARP3, promotes the retention of the LIG4-XRCC4 complex on chromatin and accelerate DNA ligation during non-homologous end-joining (NHEJ). Also acts as a negative regulator of cell pluripotency by promoting histone exchange. Required for the embryo implantation during the epithelial to mesenchymal transition in females. The polypeptide is Aprataxin and PNK-like factor (Homo sapiens (Human)).